A 394-amino-acid polypeptide reads, in one-letter code: Nicotinate phosphoribosyltransferase (394 aa).

At H218 the chain carries Phosphohistidine; by autocatalysis.

It belongs to the NAPRTase family. Post-translationally, transiently phosphorylated on a His residue during the reaction cycle. Phosphorylation strongly increases the affinity for substrates and increases the rate of nicotinate D-ribonucleotide production. Dephosphorylation regenerates the low-affinity form of the enzyme, leading to product release.

The catalysed reaction is nicotinate + 5-phospho-alpha-D-ribose 1-diphosphate + ATP + H2O = nicotinate beta-D-ribonucleotide + ADP + phosphate + diphosphate. The protein operates within cofactor biosynthesis; NAD(+) biosynthesis; nicotinate D-ribonucleotide from nicotinate: step 1/1. Functionally, catalyzes the synthesis of beta-nicotinate D-ribonucleotide from nicotinate and 5-phospho-D-ribose 1-phosphate at the expense of ATP. The polypeptide is Nicotinate phosphoribosyltransferase (Xylella fastidiosa (strain Temecula1 / ATCC 700964)).